Consider the following 20-residue polypeptide: Collagenolytic protease 36 kDa A (20 aa).

The Peptidase S1 domain maps to 1–20 (IVGGTEVTPGEIPYQLSLQD). The segment at 1–20 (IVGGTEVTPGEIPYQLSLQD) is disordered.

The protein belongs to the peptidase S1 family.

It carries out the reaction Hydrolysis of proteins, with broad specificity for peptide bonds. Native collagen is cleaved about 75% of the length of the molecule from the N-terminus. Low activity on small molecule substrates of both trypsin and chymotrypsin.. This enzyme is a serine protease capable of degrading the native triple helix of collagen. The polypeptide is Collagenolytic protease 36 kDa A (Paralithodes camtschaticus (Red king crab)).